The primary structure comprises 339 residues: Ketol-acid reductoisomerase (NADP(+)) (339 aa).

One can recognise a KARI N-terminal Rossmann domain in the interval 1-182; the sequence is MRVYYDRDAD…GGGRAGIIET (182 aa). NADP(+) is bound by residues 24–27, Arg48, Ser51, Thr53, and 83–86; these read YGSQ and DELQ. His108 is a catalytic residue. An NADP(+)-binding site is contributed by Gly134. Residues 183–328 form the KARI C-terminal knotted domain; the sequence is TFKEECETDL…AELRAMMPWI (146 aa). The Mg(2+) site is built by Asp191, Glu195, Glu227, and Glu231. Ser252 contacts substrate.

The protein belongs to the ketol-acid reductoisomerase family. It depends on Mg(2+) as a cofactor.

The enzyme catalyses (2R)-2,3-dihydroxy-3-methylbutanoate + NADP(+) = (2S)-2-acetolactate + NADPH + H(+). The catalysed reaction is (2R,3R)-2,3-dihydroxy-3-methylpentanoate + NADP(+) = (S)-2-ethyl-2-hydroxy-3-oxobutanoate + NADPH + H(+). It functions in the pathway amino-acid biosynthesis; L-isoleucine biosynthesis; L-isoleucine from 2-oxobutanoate: step 2/4. The protein operates within amino-acid biosynthesis; L-valine biosynthesis; L-valine from pyruvate: step 2/4. Functionally, involved in the biosynthesis of branched-chain amino acids (BCAA). Catalyzes an alkyl-migration followed by a ketol-acid reduction of (S)-2-acetolactate (S2AL) to yield (R)-2,3-dihydroxy-isovalerate. In the isomerase reaction, S2AL is rearranged via a Mg-dependent methyl migration to produce 3-hydroxy-3-methyl-2-ketobutyrate (HMKB). In the reductase reaction, this 2-ketoacid undergoes a metal-dependent reduction by NADPH to yield (R)-2,3-dihydroxy-isovalerate. The polypeptide is Ketol-acid reductoisomerase (NADP(+)) (Beijerinckia indica subsp. indica (strain ATCC 9039 / DSM 1715 / NCIMB 8712)).